Here is a 936-residue protein sequence, read N- to C-terminus: MLTATKPLVGGACAAPSSSARRRTFVVPEARRKPGNGRRTSVSKVGSTSTSTTTTTTTTLSADSNGAAVGTVTRPDVHVQDRTHATEMKATVTVHMSKAAGVRDFLYDLILKTWLHVDLVSSELDPQTGQEREPISGAVKHSGRVDDEWDMYEATFKVPASFGPIGAVQVTNYHHSEMLLGDIEVFPTGQEESAVTFHCKSWIDPSHCTPDKRVFFPAHSYLPSQTPKGVEGLRKRELEILRGTGCGERKEHDRIYDYDVYNDLGNPDDDNNPTTRPVLGGKEHPYPRRCRTGRPRSKKDPFSEERSHKEHIYVPRDEAFTERKMGAFDTKKFMSQLHALTTGLKTAKHKSQSFPSLSAIDQLYDDNFRNQPVQPEGGKLRFVIDLLETELLHLFKLEGAAFLEGIRRVFKFETPEIHDRDKFAWFRDEEFARQTIAGMNPMSIQLVTEFPIKSNLDEATYGPADSLITKEVVEEQIRRVMTADEAVQNKKLFMLDYHDLLLPYVHKVRKLDGTTLYGSRALFFLTADGTLRPIAIELTRPKSKKKPQWRQVFTPGCDGSVTGSWLWQLAKAHILAHDAGVHQLVSHWLRTHACTEPYIIAANRQLSQMHPVYRLLHPHFRFTMEINAQARAMLINAGGIIEGSFVPGEYSLELSSVAYDQQWRFDMEALPEDLIRRGMAVRNPNGELELAIEDYPYANDGLLVWDAIKQWALTYVQHYYPCAADIVDDEELQAWWTEVRTKGHADKQDEPWWPELDSHENLAQTLATIMWVTSGHHAAVNFGQYPMAGYIPNRPTMARRNMPTEIGGDDMRDFVEAPEKVLLDTFPSQYQSAIVLAILDLLSTHSSDEEYMGTHEEPAWTKDGVINQAFEEFKESTRKIVEQVDEWNNDPDRKNRHGAGMVPYVLLRPSDGDPTDGDPTDEKMVMEMGIPNSISI.

The tract at residues 1–69 (MLTATKPLVG…LSADSNGAAV (69 aa)) is disordered. The segment covering 47–59 (STSTSTTTTTTTT) has biased composition (low complexity). The region spanning 88–217 (MKATVTVHMS…CTPDKRVFFP (130 aa)) is the PLAT domain. Residues 220–936 (SYLPSQTPKG…EMGIPNSISI (717 aa)) form the Lipoxygenase domain. Residues 264-308 (LGNPDDDNNPTTRPVLGGKEHPYPRRCRTGRPRSKKDPFSEERSH) are disordered. Over residues 287-297 (PRRCRTGRPRS) the composition is skewed to basic residues. Residues 298–308 (KKDPFSEERSH) show a composition bias toward basic and acidic residues. Residues histidine 587, histidine 592, histidine 777, asparagine 781, and isoleucine 936 each contribute to the Fe cation site.

This sequence belongs to the lipoxygenase family. Fe cation is required as a cofactor. The N-terminus is blocked.

It localises to the plastid. Its subcellular location is the chloroplast. The enzyme catalyses (9Z,12Z)-octadecadienoate + O2 = (13S)-hydroperoxy-(9Z,11E)-octadecadienoate. It carries out the reaction (9Z,12Z,15Z)-octadecatrienoate + O2 = (13S)-hydroperoxy-(9Z,11E,15Z)-octadecatrienoate. The protein operates within lipid metabolism; oxylipin biosynthesis. Its function is as follows. Plant lipoxygenase may be involved in a number of diverse aspects of plant physiology including growth and development, pest resistance, and senescence or responses to wounding. This enzyme is possibly involved in jasmonic acid synthesis. It exhibits linoleate 13-lipoxygenase and arachidonate 15-lipoxygenase activity. The sequence is that of Lipoxygenase 2.1, chloroplastic (LOX2.1) from Hordeum vulgare (Barley).